Consider the following 299-residue polypeptide: ATP phosphoribosyltransferase (299 aa).

The protein belongs to the ATP phosphoribosyltransferase family. Long subfamily. The cofactor is Mg(2+).

Its subcellular location is the cytoplasm. It catalyses the reaction 1-(5-phospho-beta-D-ribosyl)-ATP + diphosphate = 5-phospho-alpha-D-ribose 1-diphosphate + ATP. It participates in amino-acid biosynthesis; L-histidine biosynthesis; L-histidine from 5-phospho-alpha-D-ribose 1-diphosphate: step 1/9. Its activity is regulated as follows. Feedback inhibited by histidine. In terms of biological role, catalyzes the condensation of ATP and 5-phosphoribose 1-diphosphate to form N'-(5'-phosphoribosyl)-ATP (PR-ATP). Has a crucial role in the pathway because the rate of histidine biosynthesis seems to be controlled primarily by regulation of HisG enzymatic activity. The chain is ATP phosphoribosyltransferase from Rhodopirellula baltica (strain DSM 10527 / NCIMB 13988 / SH1).